A 285-amino-acid chain; its full sequence is NADPH-dependent 7-cyano-7-deazaguanine reductase (285 aa).

Position 91–93 (91–93) interacts with substrate; it reads IES. 93–94 contacts NADPH; the sequence is SK. Residue C192 is the Thioimide intermediate of the active site. The Proton donor role is filled by D199. 231 to 232 contributes to the substrate binding site; the sequence is HE. NADPH is bound at residue 260–261; sequence RG.

It belongs to the GTP cyclohydrolase I family. QueF type 2 subfamily. Homodimer.

It localises to the cytoplasm. The enzyme catalyses 7-aminomethyl-7-carbaguanine + 2 NADP(+) = 7-cyano-7-deazaguanine + 2 NADPH + 3 H(+). It functions in the pathway tRNA modification; tRNA-queuosine biosynthesis. In terms of biological role, catalyzes the NADPH-dependent reduction of 7-cyano-7-deazaguanine (preQ0) to 7-aminomethyl-7-deazaguanine (preQ1). This is NADPH-dependent 7-cyano-7-deazaguanine reductase from Psychromonas ingrahamii (strain DSM 17664 / CCUG 51855 / 37).